The chain runs to 432 residues: Homeobox protein Hox-D3 (432 aa).

4 disordered regions span residues 43–62 (YSTPHQPYPPPAAASSLDTD), 68–197 (CSIQ…SKRV), 253–280 (QKAKGILHSPASQSPERSPPLGGAAGHV), and 400–432 (HHGPCDPHPTYTDLSAHHSSQGRLPEAPKLTHL). Residues 97 to 106 (NSQGGGGGSQ) show a composition bias toward gly residues. Positions 116–131 (PPQPPPPPPTLPPSSP) are enriched in pro residues. The segment covering 148-158 (NASSSSATISK) has biased composition (polar residues). The short motif at 160–165 (IFPWMK) is the Antp-type hexapeptide element. The segment at residues 194 to 253 (SKRVRTAYTSAQLVELEKEFHFNRYLCRPRRVEMANLLNLTERQIKIWFQNRRMKYKKDQ) is a DNA-binding region (homeobox).

The protein belongs to the Antp homeobox family.

The protein localises to the nucleus. Sequence-specific transcription factor which is part of a developmental regulatory system that provides cells with specific positional identities on the anterior-posterior axis. This Homo sapiens (Human) protein is Homeobox protein Hox-D3 (HOXD3).